Here is a 467-residue protein sequence, read N- to C-terminus: Methylenetetrahydrofolate--tRNA-(uracil-5-)-methyltransferase TrmFO (467 aa).

Residue 11–16 (GAGLAG) participates in FAD binding.

Belongs to the MnmG family. TrmFO subfamily. Requires FAD as cofactor.

Its subcellular location is the cytoplasm. The catalysed reaction is uridine(54) in tRNA + (6R)-5,10-methylene-5,6,7,8-tetrahydrofolate + NADH + H(+) = 5-methyluridine(54) in tRNA + (6S)-5,6,7,8-tetrahydrofolate + NAD(+). The enzyme catalyses uridine(54) in tRNA + (6R)-5,10-methylene-5,6,7,8-tetrahydrofolate + NADPH + H(+) = 5-methyluridine(54) in tRNA + (6S)-5,6,7,8-tetrahydrofolate + NADP(+). Functionally, catalyzes the folate-dependent formation of 5-methyl-uridine at position 54 (M-5-U54) in all tRNAs. In Prochlorococcus marinus (strain MIT 9303), this protein is Methylenetetrahydrofolate--tRNA-(uracil-5-)-methyltransferase TrmFO.